A 494-amino-acid chain; its full sequence is Glutamate--tRNA ligase (494 aa).

A 'HIGH' region motif is present at residues 9 to 19 (PSPTGDPHVGT). The 'KMSKS' region signature appears at 250–254 (KLSKR). Lysine 253 serves as a coordination point for ATP.

Belongs to the class-I aminoacyl-tRNA synthetase family. Glutamate--tRNA ligase type 1 subfamily. In terms of assembly, monomer.

It is found in the cytoplasm. The enzyme catalyses tRNA(Glu) + L-glutamate + ATP = L-glutamyl-tRNA(Glu) + AMP + diphosphate. Catalyzes the attachment of glutamate to tRNA(Glu) in a two-step reaction: glutamate is first activated by ATP to form Glu-AMP and then transferred to the acceptor end of tRNA(Glu). The polypeptide is Glutamate--tRNA ligase (Alcanivorax borkumensis (strain ATCC 700651 / DSM 11573 / NCIMB 13689 / SK2)).